Here is an 81-residue protein sequence, read N- to C-terminus: Acyl carrier protein (81 aa).

In terms of domain architecture, Carrier spans 1–79; it reads MDVAAMQVKI…DIFDYLAKNK (79 aa). The residue at position 39 (Ser39) is an O-(pantetheine 4'-phosphoryl)serine.

This sequence belongs to the acyl carrier protein (ACP) family. In terms of processing, 4'-phosphopantetheine is transferred from CoA to a specific serine of apo-ACP by AcpS. This modification is essential for activity because fatty acids are bound in thioester linkage to the sulfhydryl of the prosthetic group.

The protein localises to the cytoplasm. It participates in lipid metabolism; fatty acid biosynthesis. Carrier of the growing fatty acid chain in fatty acid biosynthesis. The protein is Acyl carrier protein of Syntrophobacter fumaroxidans (strain DSM 10017 / MPOB).